The primary structure comprises 1667 residues: Androglobin (1667 aa).

The span at 1 to 11 (MASKQTKKKEV) shows a compositional bias: basic residues. 3 disordered regions span residues 1 to 45 (MASK…KGKF), 347 to 387 (SLTT…KFSL), and 540 to 566 (GSDLPSVSETDETATHSQTDLSQITKA). A Calpain catalytic domain is found at 70 to 411 (KDKTGKSPVF…SLSDCSSAIQ (342 aa)). The span at 353–384 (APEKSDKVPKEKADARDIGKKRSKDGEKEKFK) shows a compositional bias: basic and acidic residues. A compositionally biased stretch (polar residues) spans 554–566 (THSQTDLSQITKA). In terms of domain architecture, Globin; C-terminal part spans 763-890 (HICSMVSFVI…EEVSLVEWLD (128 aa)). The heme b site is built by glutamine 792 and histidine 824. The IQ domain occupies 906-935 (EVAAAIKIQAMWRGTYVRLLMKARIPDTKE). The Globin; N-terminal part domain occupies 936–968 (NISVADTLQKVWAVLEMNLEQYAVSLLRLMFKS). Disordered regions lie at residues 1297 to 1355 (INLG…QQED) and 1420 to 1522 (TSDA…RSPT). Residues 1301-1315 (SPDSHTISEGQKSSV) are compositionally biased toward polar residues. 2 stretches are compositionally biased toward basic and acidic residues: residues 1325–1340 (EKSSEKEKTAKEKQAP) and 1433–1450 (TKPKEEVETAARGVKEPN). Residues 1451–1468 (SKNSAGSESKEMTQTGSG) show a composition bias toward polar residues. The segment covering 1487-1498 (STSSESGGVSSP) has biased composition (low complexity). The segment covering 1499–1511 (GKEEREQSTRKEN) has biased composition (basic and acidic residues). The segment covering 1512–1522 (IQTGPRTRSPT) has biased composition (polar residues). Positions 1588–1629 (QEERLKLKDEVLDMYKEMQDSLDEARQKIFDIREEYRNKLLE) form a coiled coil. The disordered stretch occupies residues 1646–1667 (KLETEKMTPAPDTQKKKKGKKK).

In the central section; belongs to the globin family. The protein in the N-terminal section; belongs to the peptidase C2 family. Interacts with septin SEPT10; contributes to in vitro proteolytic cleavage of SEPT10 in a calmodulin-dependent manner. Interacts with CFAP69. Interacts with SPEF2. May interact with calmodulin.

Its subcellular location is the cell projection. It localises to the cilium. It is found in the flagellum. Functionally, probable chimeric globin with a bis-histidyl six-coordinate heme-iron atom through which it could bind dioxygen, carbon monoxide and nitric oxide. Required for sperm flagellum formation and maturation of elongating spermatids, thus playing an essential role in male fertility. This Homo sapiens (Human) protein is Androglobin.